An 85-amino-acid chain; its full sequence is Small ribosomal subunit protein bS20 (85 aa).

Residues 1–22 (MPQIKSAIKRVKTQNATNKRNA) form a disordered region. The span at 13 to 22 (TQNATNKRNA) shows a compositional bias: polar residues.

It belongs to the bacterial ribosomal protein bS20 family.

In terms of biological role, binds directly to 16S ribosomal RNA. This is Small ribosomal subunit protein bS20 from Lactobacillus acidophilus (strain ATCC 700396 / NCK56 / N2 / NCFM).